We begin with the raw amino-acid sequence, 391 residues long: Oxygen-dependent coproporphyrinogen-III oxidase, chloroplastic (391 aa).

The segment covering 1 to 13 (MASSLLTTPSQTL) has biased composition (polar residues). Positions 1-34 (MASSLLTTPSQTLAPNPAAARARRSSPAAAQVSF) are disordered. Positions 14-30 (APNPAAARARRSSPAAA) are enriched in low complexity. Residues 125-134 (VLQDGNVFEK) form an important for dimerization region. A substrate-binding site is contributed by S179. H193 serves as the catalytic Proton donor. Residues 195–197 (NYR) and 349–354 (GGRIES) contribute to the substrate site. The interval 331 to 366 (YVEFNLVYDRGTTFGLKTGGRIESILVSLPLTARWE) is important for dimerization.

Belongs to the aerobic coproporphyrinogen-III oxidase family. Homodimer.

It is found in the plastid. It localises to the chloroplast. The catalysed reaction is coproporphyrinogen III + O2 + 2 H(+) = protoporphyrinogen IX + 2 CO2 + 2 H2O. It participates in porphyrin-containing compound metabolism; protoporphyrin-IX biosynthesis; protoporphyrinogen-IX from coproporphyrinogen-III (O2 route): step 1/1. Functionally, involved in the heme and chlorophyll biosynthesis. Catalyzes the aerobic oxidative decarboxylation of propionate groups of rings A and B of coproporphyrinogen-III to yield the vinyl groups in protoporphyrinogen-IX. This chain is Oxygen-dependent coproporphyrinogen-III oxidase, chloroplastic (CPX), found in Hordeum vulgare (Barley).